The primary structure comprises 546 residues: Chaperonin GroEL (546 aa).

ATP-binding positions include 30 to 33 (TLGP), Lys51, 87 to 91 (DGTTT), Gly415, 479 to 481 (NAA), and Asp495.

Belongs to the chaperonin (HSP60) family. As to quaternary structure, forms a cylinder of 14 subunits composed of two heptameric rings stacked back-to-back. Interacts with the co-chaperonin GroES.

Its subcellular location is the cytoplasm. The enzyme catalyses ATP + H2O + a folded polypeptide = ADP + phosphate + an unfolded polypeptide.. Together with its co-chaperonin GroES, plays an essential role in assisting protein folding. The GroEL-GroES system forms a nano-cage that allows encapsulation of the non-native substrate proteins and provides a physical environment optimized to promote and accelerate protein folding. This Stutzerimonas stutzeri (strain A1501) (Pseudomonas stutzeri) protein is Chaperonin GroEL.